The sequence spans 187 residues: Ribonuclease HII (187 aa).

The region spanning 1–187 is the RNase H type-2 domain; the sequence is MIILGIDEAG…YKPVQVLLNE (187 aa). 3 residues coordinate a divalent metal cation: Asp7, Glu8, and Asp99.

This sequence belongs to the RNase HII family. Requires Mn(2+) as cofactor. Mg(2+) serves as cofactor.

Its subcellular location is the cytoplasm. It carries out the reaction Endonucleolytic cleavage to 5'-phosphomonoester.. In terms of biological role, endonuclease that specifically degrades the RNA of RNA-DNA hybrids. The sequence is that of Ribonuclease HII from Francisella tularensis subsp. holarctica (strain FTNF002-00 / FTA).